A 249-amino-acid polypeptide reads, in one-letter code: NADH-quinone oxidoreductase subunit C (249 aa).

A disordered region spans residues 1-29; it reads MTENQTTPDPGEPGSSADRPGGLVPTGDS.

The protein belongs to the complex I 30 kDa subunit family. NDH-1 is composed of 14 different subunits. Subunits NuoB, C, D, E, F, and G constitute the peripheral sector of the complex.

It is found in the cell membrane. It carries out the reaction a quinone + NADH + 5 H(+)(in) = a quinol + NAD(+) + 4 H(+)(out). Its function is as follows. NDH-1 shuttles electrons from NADH, via FMN and iron-sulfur (Fe-S) centers, to quinones in the respiratory chain. The immediate electron acceptor for the enzyme in this species is believed to be a menaquinone. Couples the redox reaction to proton translocation (for every two electrons transferred, four hydrogen ions are translocated across the cytoplasmic membrane), and thus conserves the redox energy in a proton gradient. In Saccharopolyspora erythraea (strain ATCC 11635 / DSM 40517 / JCM 4748 / NBRC 13426 / NCIMB 8594 / NRRL 2338), this protein is NADH-quinone oxidoreductase subunit C.